Consider the following 68-residue polypeptide: MKQPSLDILLSKVDSKYTLVLAAAKRARTLMEDPEFEVNYRGSKPVSLAFDEIAKGKYHFELTREGIK.

It belongs to the RNA polymerase subunit omega family. In terms of assembly, the RNAP catalytic core consists of 2 alpha, 1 beta, 1 beta' and 1 omega subunit. When a sigma factor is associated with the core the holoenzyme is formed, which can initiate transcription.

It carries out the reaction RNA(n) + a ribonucleoside 5'-triphosphate = RNA(n+1) + diphosphate. In terms of biological role, promotes RNA polymerase assembly. Latches the N- and C-terminal regions of the beta' subunit thereby facilitating its interaction with the beta and alpha subunits. This is DNA-directed RNA polymerase subunit omega from Desulfitobacterium hafniense (strain DSM 10664 / DCB-2).